The primary structure comprises 1471 residues: Myosin-4 (1471 aa).

A Myosin N-terminal SH3-like domain is found at 4–57 (EVGTKCWYPHKEQGWIGGEVTKNDFFEGTFHLELKLEDGETVSIETNSFENDDD). A Myosin motor domain is found at 71 to 777 (ESTDDLTTLS…MLAFLEKLRT (707 aa)). 165–172 (GESGAGKT) serves as a coordination point for ATP. Positions 647-669 (LGELMAIINSTNVHYIRCIKPNS) are actin-binding. IQ domains follow at residues 781-801 (NEIC…LQYL), 804-824 (MESI…TRVD), 829-849 (TRAA…EYYR), 876-898 (MLMA…DYRT), and 899-928 (LKRS…EVEE). Residues 938–1063 (GLLEEAIEFK…LAFIENVIAQ (126 aa)) adopt a coiled-coil conformation. The region spanning 1164-1419 (SKVLLTVESI…LNYLANVIKR (256 aa)) is the Dilute domain.

Belongs to the TRAFAC class myosin-kinesin ATPase superfamily. Myosin family. As to quaternary structure, interacts with SHE2 and SHE3.

The protein resides in the bud. In terms of biological role, part of the mRNA localization machinery that restricts accumulation of certain proteins to the bud and in the daughter cell. Recruited to specific mRNAs including the ASH1 mRNA, coding for a repressor of the HO endonuclease, via its interaction with SHE3. The chain is Myosin-4 (MYO4) from Saccharomyces cerevisiae (strain ATCC 204508 / S288c) (Baker's yeast).